The sequence spans 551 residues: Palatinase (551 aa).

Asp201 serves as the catalytic Nucleophile. Glu243 functions as the Proton donor in the catalytic mechanism.

The protein belongs to the glycosyl hydrolase 13 family.

The enzyme catalyses 6-O-alpha-D-glucopyranosyl-D-fructose + H2O = alpha-D-glucose + D-fructose. It functions in the pathway glycan degradation; palatinose degradation. Functionally, catalyzes the hydrolysis of palatinose. Shows a strict specificity toward palatinose, and cannot release glucose from the disaccharides sucrose, maltose, trehalose and melibiose. Involved in the degradation of palatinose, a sucrose isomer that is formed as a reserve material under conditions of excess carbon availability, sequestered in a form unavailable to competitors such as fungi or the host plant, and whose consumption appears to be postponed until the preferentially metabolized carbon source (e.g. sucrose) is depleted. This Erwinia rhapontici (Pectobacterium rhapontici) protein is Palatinase.